The sequence spans 501 residues: Pyruvate kinase (501 aa).

Residue Arg50 coordinates substrate. K(+) is bound by residues Asn52, Ser54, Asp85, and Thr86. Residue 52 to 55 (NFSH) participates in ATP binding. Positions 92 and 178 each coordinate ATP. Residue Glu243 coordinates Mg(2+). Gly266, Asp267, and Thr299 together coordinate substrate. Asp267 is a binding site for Mg(2+).

The protein belongs to the pyruvate kinase family. As to quaternary structure, homotetramer. The cofactor is Mg(2+). K(+) serves as cofactor.

The catalysed reaction is pyruvate + ATP = phosphoenolpyruvate + ADP + H(+). Its pathway is carbohydrate degradation; glycolysis; pyruvate from D-glyceraldehyde 3-phosphate: step 5/5. This Kluyveromyces lactis (strain ATCC 8585 / CBS 2359 / DSM 70799 / NBRC 1267 / NRRL Y-1140 / WM37) (Yeast) protein is Pyruvate kinase (PYK1).